Reading from the N-terminus, the 343-residue chain is 3-dehydroquinate synthase (343 aa).

Residues 61-66, 95-99, 119-120, Lys132, Lys141, and 159-162 contribute to the NAD(+) site; these read SGEKYK, GVISD, TT, and FLKT. Zn(2+) contacts are provided by Glu174, His231, and His248.

The protein belongs to the sugar phosphate cyclases superfamily. Dehydroquinate synthase family. Requires Co(2+) as cofactor. Zn(2+) serves as cofactor. NAD(+) is required as a cofactor.

It is found in the cytoplasm. The catalysed reaction is 7-phospho-2-dehydro-3-deoxy-D-arabino-heptonate = 3-dehydroquinate + phosphate. It functions in the pathway metabolic intermediate biosynthesis; chorismate biosynthesis; chorismate from D-erythrose 4-phosphate and phosphoenolpyruvate: step 2/7. Its function is as follows. Catalyzes the conversion of 3-deoxy-D-arabino-heptulosonate 7-phosphate (DAHP) to dehydroquinate (DHQ). The protein is 3-dehydroquinate synthase of Helicobacter pylori (strain HPAG1).